The sequence spans 257 residues: Imidazole glycerol phosphate synthase subunit HisF (257 aa).

Active-site residues include aspartate 11 and aspartate 130.

Belongs to the HisA/HisF family. Heterodimer of HisH and HisF.

It localises to the cytoplasm. The catalysed reaction is 5-[(5-phospho-1-deoxy-D-ribulos-1-ylimino)methylamino]-1-(5-phospho-beta-D-ribosyl)imidazole-4-carboxamide + L-glutamine = D-erythro-1-(imidazol-4-yl)glycerol 3-phosphate + 5-amino-1-(5-phospho-beta-D-ribosyl)imidazole-4-carboxamide + L-glutamate + H(+). Its pathway is amino-acid biosynthesis; L-histidine biosynthesis; L-histidine from 5-phospho-alpha-D-ribose 1-diphosphate: step 5/9. Its function is as follows. IGPS catalyzes the conversion of PRFAR and glutamine to IGP, AICAR and glutamate. The HisF subunit catalyzes the cyclization activity that produces IGP and AICAR from PRFAR using the ammonia provided by the HisH subunit. The sequence is that of Imidazole glycerol phosphate synthase subunit HisF from Proteus mirabilis (strain HI4320).